A 336-amino-acid polypeptide reads, in one-letter code: Ferredoxin--NADP reductase 1 (336 aa).

Positions 37, 45, 50, 90, 125, 287, and 328 each coordinate FAD.

It belongs to the ferredoxin--NADP reductase type 2 family. In terms of assembly, homodimer. The cofactor is FAD.

It catalyses the reaction 2 reduced [2Fe-2S]-[ferredoxin] + NADP(+) + H(+) = 2 oxidized [2Fe-2S]-[ferredoxin] + NADPH. This Bacillus subtilis (strain 168) protein is Ferredoxin--NADP reductase 1 (ycgT).